The following is a 190-amino-acid chain: CASP-like protein 1U3 (190 aa).

Topologically, residues 1 to 24 (MNGATVQPSYKEAGPVRYHPMHDC) are cytoplasmic. A helical membrane pass occupies residues 25–45 (LSLILRLLTLGATIAAIVAML). The Extracellular portion of the chain corresponds to 46 to 70 (KSTQTVPTLLGPHTARWKDFPAFEW). Residues 71-91 (FVIGNSIVLVYAALGTLAACL) form a helical membrane-spanning segment. Topologically, residues 92–113 (SLFTRRGPLSYTKTAWLTFLCD) are cytoplasmic. The helical transmembrane segment at 114–134 (FICSCALISAGSTALGVAWIG) threads the bilayer. Residues 135–158 (KHGQHSAFWNAVCPTVDRFCDYVQ) lie on the Extracellular side of the membrane. Residues 159–179 (GALIATLCGFIFQALSTVIAA) traverse the membrane as a helical segment. The Cytoplasmic portion of the chain corresponds to 180-190 (SALHNLATHRH).

Belongs to the Casparian strip membrane proteins (CASP) family. As to quaternary structure, homodimer and heterodimers.

The protein resides in the cell membrane. This chain is CASP-like protein 1U3, found in Physcomitrium patens (Spreading-leaved earth moss).